The chain runs to 62 residues: Alpha-conotoxin-like Bn1.3 (62 aa).

An N-terminal signal peptide occupies residues 1–18 (MGMRMMFTVFLLVVLATA). Positions 19 to 48 (VLPVTLDRASDGRNAAANAKTPRLIAPFIR) are excised as a propeptide. 2 cysteine pairs are disulfide-bonded: Cys-51–Cys-57 and Cys-52–Cys-61. Cys-61 carries the post-translational modification Cysteine amide.

It belongs to the conotoxin A superfamily. Expressed by the venom duct.

It localises to the secreted. Functionally, does not show activity on the acetylcholine receptors tested. This Conus bandanus (Banded marble cone) protein is Alpha-conotoxin-like Bn1.3.